We begin with the raw amino-acid sequence, 416 residues long: UDP-N-acetylmuramoylalanine--D-glutamate ligase (416 aa).

Position 108-114 (108-114 (GTTGKTT)) interacts with ATP.

The protein belongs to the MurCDEF family.

Its subcellular location is the cytoplasm. The catalysed reaction is UDP-N-acetyl-alpha-D-muramoyl-L-alanine + D-glutamate + ATP = UDP-N-acetyl-alpha-D-muramoyl-L-alanyl-D-glutamate + ADP + phosphate + H(+). It functions in the pathway cell wall biogenesis; peptidoglycan biosynthesis. In terms of biological role, cell wall formation. Catalyzes the addition of glutamate to the nucleotide precursor UDP-N-acetylmuramoyl-L-alanine (UMA). The protein is UDP-N-acetylmuramoylalanine--D-glutamate ligase of Chlamydia trachomatis serovar A (strain ATCC VR-571B / DSM 19440 / HAR-13).